The chain runs to 1464 residues: DNA-directed RNA polymerase subunit beta' (1464 aa).

Aspartate 541, aspartate 543, and aspartate 545 together coordinate Mg(2+). Residues cysteine 1022, cysteine 1098, cysteine 1105, and cysteine 1108 each contribute to the Zn(2+) site. Residues 1435–1464 form a disordered region; it reads LEDEQQQIIEVDDSDISVEDEENDFYENED.

The protein belongs to the RNA polymerase beta' chain family. As to quaternary structure, the RNAP catalytic core consists of 2 alpha, 1 beta, 1 beta' and 1 omega subunit. When a sigma factor is associated with the core the holoenzyme is formed, which can initiate transcription. It depends on Mg(2+) as a cofactor. Requires Zn(2+) as cofactor.

The enzyme catalyses RNA(n) + a ribonucleoside 5'-triphosphate = RNA(n+1) + diphosphate. In terms of biological role, DNA-dependent RNA polymerase catalyzes the transcription of DNA into RNA using the four ribonucleoside triphosphates as substrates. This chain is DNA-directed RNA polymerase subunit beta', found in Metamycoplasma arthritidis (strain 158L3-1) (Mycoplasma arthritidis).